The primary structure comprises 199 residues: NAD(P)H dehydrogenase (quinone) (199 aa).

In terms of domain architecture, Flavodoxin-like spans 4-190 (VLVLYYSAYG…AGARYQGRRV (187 aa)). FMN-binding positions include 10 to 15 (SAYGHI) and 78 to 80 (TRF). NAD(+) is bound at residue Tyr12. Residue Trp98 participates in substrate binding. FMN contacts are provided by residues 113 to 119 (STATQHG) and His134.

The protein belongs to the WrbA family. It depends on FMN as a cofactor.

The catalysed reaction is a quinone + NADH + H(+) = a quinol + NAD(+). It catalyses the reaction a quinone + NADPH + H(+) = a quinol + NADP(+). The chain is NAD(P)H dehydrogenase (quinone) from Methylocella silvestris (strain DSM 15510 / CIP 108128 / LMG 27833 / NCIMB 13906 / BL2).